Reading from the N-terminus, the 219-residue chain is N-(5'-phosphoribosyl)anthranilate isomerase (219 aa).

It belongs to the TrpF family.

The enzyme catalyses N-(5-phospho-beta-D-ribosyl)anthranilate = 1-(2-carboxyphenylamino)-1-deoxy-D-ribulose 5-phosphate. Its pathway is amino-acid biosynthesis; L-tryptophan biosynthesis; L-tryptophan from chorismate: step 3/5. This is N-(5'-phosphoribosyl)anthranilate isomerase from Bordetella avium (strain 197N).